Here is a 377-residue protein sequence, read N- to C-terminus: Adaptive-response sensory kinase SasA (377 aa).

The 220-residue stretch at 154 to 373 folds into the Histidine kinase domain; it reads MLVHDLRSPL…SFHFTLPVYR (220 aa). At His157 the chain carries Phosphohistidine; by autocatalysis.

In terms of assembly, homooligomerizes. Interacts with KaiC. Participates in the KaiABC clock complex, whose core is composed of a KaiC homohexamer, 6 KaiB and up to 6 KaiA dimers. SasA and KaiB(fs) compete to bind to KaiC.

The catalysed reaction is ATP + protein L-histidine = ADP + protein N-phospho-L-histidine.. Member of the two-component regulatory system SasA/RpaA involved in genome-wide circadian gene expression. One of several clock output pathways. Participates in the Kai clock protein complex, the main circadian regulator in cyanobacteria, via its interaction with KaiC. KaiC enhances the autophosphorylation activity of SasA, which then transfers its phosphate group to RpaA to activate it. In addition to its output function, recruits fold-shifted KaiB (KaiB(fs)) to KaiC to cooperatively form the KaiB(6):KaiC(6) complex (independent of SasA kinase activity). Required for robustness of the circadian rhythm of gene expression and is involved in clock output, also required for adaptation to light/dark cycles. The chain is Adaptive-response sensory kinase SasA from Synechococcus sp. (strain JA-3-3Ab) (Cyanobacteria bacterium Yellowstone A-Prime).